The primary structure comprises 377 residues: Porphobilinogen deaminase (377 aa).

Cys-269 is modified (S-(dipyrrolylmethanemethyl)cysteine).

Belongs to the HMBS family. Monomer. The cofactor is dipyrromethane.

It carries out the reaction 4 porphobilinogen + H2O = hydroxymethylbilane + 4 NH4(+). The protein operates within porphyrin-containing compound metabolism; protoporphyrin-IX biosynthesis; coproporphyrinogen-III from 5-aminolevulinate: step 2/4. Its function is as follows. Tetrapolymerization of the monopyrrole PBG into the hydroxymethylbilane pre-uroporphyrinogen in several discrete steps. The chain is Porphobilinogen deaminase from Micrococcus luteus (strain ATCC 4698 / DSM 20030 / JCM 1464 / CCM 169 / CCUG 5858 / IAM 1056 / NBRC 3333 / NCIMB 9278 / NCTC 2665 / VKM Ac-2230) (Micrococcus lysodeikticus).